A 305-amino-acid polypeptide reads, in one-letter code: UDP-3-O-acyl-N-acetylglucosamine deacetylase (305 aa).

Zn(2+)-binding residues include His78, His237, and Asp241. His264 functions as the Proton donor in the catalytic mechanism.

This sequence belongs to the LpxC family. Zn(2+) is required as a cofactor.

It carries out the reaction a UDP-3-O-[(3R)-3-hydroxyacyl]-N-acetyl-alpha-D-glucosamine + H2O = a UDP-3-O-[(3R)-3-hydroxyacyl]-alpha-D-glucosamine + acetate. The protein operates within glycolipid biosynthesis; lipid IV(A) biosynthesis; lipid IV(A) from (3R)-3-hydroxytetradecanoyl-[acyl-carrier-protein] and UDP-N-acetyl-alpha-D-glucosamine: step 2/6. Catalyzes the hydrolysis of UDP-3-O-myristoyl-N-acetylglucosamine to form UDP-3-O-myristoylglucosamine and acetate, the committed step in lipid A biosynthesis. The protein is UDP-3-O-acyl-N-acetylglucosamine deacetylase of Ralstonia pickettii (strain 12J).